The following is a 300-amino-acid chain: Platelet-derived growth factor D (300 aa).

One can recognise a CUB domain in the interval 1–114; the sequence is QVTGNGHVQS…PGFKIYYSFV (114 aa). C53 and C75 are disulfide-bonded. A glycan (N-linked (GlcNAc...) asparagine) is linked at N220.

This sequence belongs to the PDGF/VEGF growth factor family. Homodimer; disulfide-linked. Interacts with PDGFRB homodimers, and with heterodimers formed by PDGFRA and PDGFRB. In terms of processing, activated by proteolytic cleavage. Proteolytic removal of the N-terminal CUB domain releasing the core domain is necessary for unmasking the receptor-binding epitopes of the core domain. Cleavage after Arg-191 or Arg-193 by urokinase plasminogen activator gives rise to the active form.

The protein localises to the secreted. Growth factor that plays an essential role in the regulation of embryonic development, cell proliferation, cell migration, survival and chemotaxis. Potent mitogen for cells of mesenchymal origin. Plays an important role in wound healing. Induces macrophage recruitment, increased interstitial pressure, and blood vessel maturation during angiogenesis. Can initiate events that lead to a mesangial proliferative glomerulonephritis, including influx of monocytes and macrophages and production of extracellular matrix. The chain is Platelet-derived growth factor D (PDGFD) from Oryctolagus cuniculus (Rabbit).